Reading from the N-terminus, the 28-residue chain is Trypsin inhibitor 4 (28 aa).

3 cysteine pairs are disulfide-bonded: Cys2–Cys19, Cys9–Cys21, and Cys15–Cys27.

Belongs to the protease inhibitor I7 (squash-type serine protease inhibitor) family.

The protein localises to the secreted. Functionally, inhibits trypsin. The polypeptide is Trypsin inhibitor 4 (Luffa aegyptiaca (Sponge gourd)).